Here is a 176-residue protein sequence, read N- to C-terminus: NAD(P)H-quinone oxidoreductase subunit 6, chloroplastic (176 aa).

The next 5 membrane-spanning stretches (helical) occupy residues 10–30 (ILML…VLLT), 33–53 (IYSA…YFLL), 60–80 (VAQL…AVMF), 95–115 (IGDG…MTTI), and 152–172 (FYLP…GAIT).

The protein belongs to the complex I subunit 6 family. As to quaternary structure, NDH is composed of at least 16 different subunits, 5 of which are encoded in the nucleus.

The protein localises to the plastid. It is found in the chloroplast thylakoid membrane. It carries out the reaction a plastoquinone + NADH + (n+1) H(+)(in) = a plastoquinol + NAD(+) + n H(+)(out). The catalysed reaction is a plastoquinone + NADPH + (n+1) H(+)(in) = a plastoquinol + NADP(+) + n H(+)(out). Its function is as follows. NDH shuttles electrons from NAD(P)H:plastoquinone, via FMN and iron-sulfur (Fe-S) centers, to quinones in the photosynthetic chain and possibly in a chloroplast respiratory chain. The immediate electron acceptor for the enzyme in this species is believed to be plastoquinone. Couples the redox reaction to proton translocation, and thus conserves the redox energy in a proton gradient. The chain is NAD(P)H-quinone oxidoreductase subunit 6, chloroplastic (ndhG) from Triticum aestivum (Wheat).